The chain runs to 1343 residues: Xanthine dehydrogenase (1343 aa).

Positions 8 to 95 (SELVFFVNGK…GCAVTTVEGI (88 aa)) constitute a 2Fe-2S ferredoxin-type domain. [2Fe-2S] cluster-binding residues include C47, C52, C55, C77, C117, C120, C152, and C154. Positions 235–424 (FSSERVTWYR…LGIHFQKTTP (190 aa)) constitute an FAD-binding PCMH-type domain. Residues 263-270 (LVVGNTEV), F343, 353-357 (CLGGN), D366, L414, and K432 contribute to the FAD site. Mo-molybdopterin contacts are provided by Q780 and F811. Substrate contacts are provided by E815 and R893. A Mo-molybdopterin-binding site is contributed by R925. F927 is a binding site for substrate. Residue A1092 participates in Mo-molybdopterin binding. The active-site Proton acceptor is the E1275.

The protein belongs to the xanthine dehydrogenase family. As to quaternary structure, homodimer. Requires FAD as cofactor. The cofactor is Mo-molybdopterin. It depends on [2Fe-2S] cluster as a cofactor.

The protein localises to the peroxisome. The enzyme catalyses xanthine + NAD(+) + H2O = urate + NADH + H(+). It carries out the reaction hypoxanthine + NAD(+) + H2O = xanthine + NADH + H(+). Key enzyme in purine degradation. Catalyzes the oxidation of hypoxanthine to xanthine. Catalyzes the oxidation of xanthine to uric acid. This chain is Xanthine dehydrogenase (ry), found in Drosophila pseudoobscura pseudoobscura (Fruit fly).